A 431-amino-acid polypeptide reads, in one-letter code: Serine--tRNA ligase (431 aa).

The tract at residues 41 to 66 (QSRTQELQAERNARSKSIGEAARRGE) is disordered. 240–242 (TSE) lines the L-serine pocket. 271–273 (RSE) is a binding site for ATP. An L-serine-binding site is contributed by E294. 358-361 (EISS) provides a ligand contact to ATP. An L-serine-binding site is contributed by S392.

The protein belongs to the class-II aminoacyl-tRNA synthetase family. Type-1 seryl-tRNA synthetase subfamily. As to quaternary structure, homodimer. The tRNA molecule binds across the dimer.

The protein resides in the cytoplasm. It carries out the reaction tRNA(Ser) + L-serine + ATP = L-seryl-tRNA(Ser) + AMP + diphosphate + H(+). It catalyses the reaction tRNA(Sec) + L-serine + ATP = L-seryl-tRNA(Sec) + AMP + diphosphate + H(+). Its pathway is aminoacyl-tRNA biosynthesis; selenocysteinyl-tRNA(Sec) biosynthesis; L-seryl-tRNA(Sec) from L-serine and tRNA(Sec): step 1/1. In terms of biological role, catalyzes the attachment of serine to tRNA(Ser). Is also able to aminoacylate tRNA(Sec) with serine, to form the misacylated tRNA L-seryl-tRNA(Sec), which will be further converted into selenocysteinyl-tRNA(Sec). This Aeromonas salmonicida (strain A449) protein is Serine--tRNA ligase.